Reading from the N-terminus, the 381-residue chain is cAMP-dependent protein kinase type I-beta regulatory subunit (381 aa).

A dimerization and phosphorylation region spans residues 1-136 (MASPSCFHSE…ALAKAISKNV (136 aa)). S3 is subject to Phosphoserine. Y21 carries the 3'-nitrotyrosine modification. The tract at residues 66 to 88 (LARQKSNSQCDSHDEEISPTPPN) is disordered. Residues S77 and S83 each carry the phosphoserine modification. The residue at position 85 (T85) is a Phosphothreonine. Positions 96 to 100 (RRGGV) match the Pseudophosphorylation motif motif. R97 is subject to Omega-N-methylarginine. 3',5'-cyclic AMP is bound by residues 137–254 (LFSH…SKVS), E202, R211, 255–381 (ILES…SLTV), E326, and R335.

The protein belongs to the cAMP-dependent kinase regulatory chain family. In terms of assembly, the inactive holoenzyme is composed of two regulatory chains and two catalytic chains. Activation by cAMP releases the two active catalytic monomers and the regulatory dimer. Interacts with PRKX; regulates this cAMP-dependent protein kinase. Interacts with smAKAP; this interaction may target PRKAR1B to the plasma membrane. Post-translationally, the pseudophosphorylation site binds to the substrate-binding region of the catalytic chain, resulting in the inhibition of its activity. Abundant in brain and testis. No expression in lung, heart, liver, spleen, kidney and skeletal muscle.

The protein resides in the cell membrane. In terms of biological role, regulatory subunit of the cAMP-dependent protein kinases involved in cAMP signaling in cells. This is cAMP-dependent protein kinase type I-beta regulatory subunit (Prkar1b) from Rattus norvegicus (Rat).